The sequence spans 357 residues: Glutamine synthetase (357 aa).

The 80-residue stretch at valine 25–glycine 104 folds into the GS beta-grasp domain. One can recognise a GS catalytic domain in the interval tyrosine 111 to leucine 357.

The protein belongs to the glutamine synthetase family. Homooctamer.

It is found in the cytoplasm. The enzyme catalyses L-glutamate + NH4(+) + ATP = L-glutamine + ADP + phosphate + H(+). The sequence is that of Glutamine synthetase (glnA) from Emericella nidulans (strain FGSC A4 / ATCC 38163 / CBS 112.46 / NRRL 194 / M139) (Aspergillus nidulans).